Consider the following 933-residue polypeptide: Protein translocase subunit SecA (933 aa).

ATP-binding positions include Gln87, 105 to 109 (GEGKT), and Asp515. Disordered regions lie at residues 567 to 588 (ESRRIDNQLRGRSGRQGDPGSS), 840 to 861 (DVEAVEEQRRQEAERMQMRHAA), and 880 to 933 (AAAE…CGKL). The span at 845–856 (EEQRRQEAERMQ) shows a compositional bias: basic and acidic residues. Residues 880–897 (AAAEGDSAPTGGAQQQSA) are compositionally biased toward low complexity. Basic and acidic residues predominate over residues 905–914 (VAREGPKVGR). 4 residues coordinate Zn(2+): Cys918, Cys920, Cys929, and Cys930. A compositionally biased stretch (basic residues) spans 924–933 (KKYKHCCGKL).

The protein belongs to the SecA family. As to quaternary structure, monomer and homodimer. Part of the essential Sec protein translocation apparatus which comprises SecA, SecYEG and auxiliary proteins SecDF-YajC and YidC. The cofactor is Zn(2+).

Its subcellular location is the cell inner membrane. The protein resides in the cytoplasm. The catalysed reaction is ATP + H2O + cellular proteinSide 1 = ADP + phosphate + cellular proteinSide 2.. Part of the Sec protein translocase complex. Interacts with the SecYEG preprotein conducting channel. Has a central role in coupling the hydrolysis of ATP to the transfer of proteins into and across the cell membrane, serving both as a receptor for the preprotein-SecB complex and as an ATP-driven molecular motor driving the stepwise translocation of polypeptide chains across the membrane. In Halorhodospira halophila (strain DSM 244 / SL1) (Ectothiorhodospira halophila (strain DSM 244 / SL1)), this protein is Protein translocase subunit SecA.